The chain runs to 526 residues: Bifunctional purine biosynthesis protein PurH (526 aa).

Positions 1-145 (MSKAPLALLS…KNHAHVGIVT (145 aa)) constitute an MGS-like domain.

The protein belongs to the PurH family.

It catalyses the reaction (6R)-10-formyltetrahydrofolate + 5-amino-1-(5-phospho-beta-D-ribosyl)imidazole-4-carboxamide = 5-formamido-1-(5-phospho-D-ribosyl)imidazole-4-carboxamide + (6S)-5,6,7,8-tetrahydrofolate. The enzyme catalyses IMP + H2O = 5-formamido-1-(5-phospho-D-ribosyl)imidazole-4-carboxamide. It functions in the pathway purine metabolism; IMP biosynthesis via de novo pathway; 5-formamido-1-(5-phospho-D-ribosyl)imidazole-4-carboxamide from 5-amino-1-(5-phospho-D-ribosyl)imidazole-4-carboxamide (10-formyl THF route): step 1/1. Its pathway is purine metabolism; IMP biosynthesis via de novo pathway; IMP from 5-formamido-1-(5-phospho-D-ribosyl)imidazole-4-carboxamide: step 1/1. The sequence is that of Bifunctional purine biosynthesis protein PurH from Psychrobacter cryohalolentis (strain ATCC BAA-1226 / DSM 17306 / VKM B-2378 / K5).